Consider the following 62-residue polypeptide: Large ribosomal subunit protein bL28 (62 aa).

This sequence belongs to the bacterial ribosomal protein bL28 family.

This is Large ribosomal subunit protein bL28 from Caldanaerobacter subterraneus subsp. tengcongensis (strain DSM 15242 / JCM 11007 / NBRC 100824 / MB4) (Thermoanaerobacter tengcongensis).